We begin with the raw amino-acid sequence, 318 residues long: Trans-prenyltransferase (318 aa).

The chain crosses the membrane as a helical span at residues 1–21 (MLHLIYISIIVVLIIILISYT). Positions 85, 88, and 122 each coordinate isopentenyl diphosphate. 2 residues coordinate Mg(2+): D129 and D135. R140 provides a ligand contact to dimethylallyl diphosphate. R141 is a binding site for isopentenyl diphosphate. Residues K216, T217, and Q254 each contribute to the dimethylallyl diphosphate site.

It belongs to the FPP/GGPP synthase family. Asfivirus trans-prenyltransferase subfamily. The cofactor is Mg(2+).

Its subcellular location is the host endoplasmic reticulum. The protein localises to the host membrane. The enzyme catalyses isopentenyl diphosphate + dimethylallyl diphosphate = (2E)-geranyl diphosphate + diphosphate. It carries out the reaction isopentenyl diphosphate + (2E)-geranyl diphosphate = (2E,6E)-farnesyl diphosphate + diphosphate. It catalyses the reaction isopentenyl diphosphate + (2E,6E)-farnesyl diphosphate = (2E,6E,10E)-geranylgeranyl diphosphate + diphosphate. The catalysed reaction is isopentenyl diphosphate + (2E,6E,10E)-geranylgeranyl diphosphate = (2E,6E,10E,14E)-geranylfarnesyl diphosphate + diphosphate. It functions in the pathway isoprenoid biosynthesis; farnesyl diphosphate biosynthesis; farnesyl diphosphate from geranyl diphosphate and isopentenyl diphosphate: step 1/1. Its pathway is isoprenoid biosynthesis; geranyl diphosphate biosynthesis; geranyl diphosphate from dimethylallyl diphosphate and isopentenyl diphosphate: step 1/1. It participates in isoprenoid biosynthesis; geranylgeranyl diphosphate biosynthesis; geranylgeranyl diphosphate from farnesyl diphosphate and isopentenyl diphosphate: step 1/1. Functionally, trans-prenyltransferase that catalyzes the sequential condensation of isopentenyl diphosphate (IPP) with different allylic diphosphates, such as dimethylallyl diphosphate (DMAPP), geranyl diphosphate (GPP), farnesyl diphosphate (FPP) and geranylgeranyl diphosphate (GGPP), farnesyl diphosphate being the best allylic substrate. This chain is Trans-prenyltransferase, found in African swine fever virus (isolate Tick/Malawi/Lil 20-1/1983) (ASFV).